The primary structure comprises 535 residues: CTP synthase (535 aa).

Positions 1 to 267 (MTKYIFVTGG…DQIVCDHLKL (267 aa)) are amidoligase domain. S13 is a CTP binding site. S13 provides a ligand contact to UTP. 14 to 19 (SLGKGI) lines the ATP pocket. Y54 contacts L-glutamine. D71 contacts ATP. Mg(2+)-binding residues include D71 and E141. CTP contacts are provided by residues 148–150 (DIE), 188–193 (KTKPTQ), and K224. UTP is bound by residues 188–193 (KTKPTQ) and K224. Residue 240 to 242 (RDA) coordinates ATP. In terms of domain architecture, Glutamine amidotransferase type-1 spans 292–534 (KIALVGKYVE…VSASITNKES (243 aa)). G354 contributes to the L-glutamine binding site. Catalysis depends on C381, which acts as the Nucleophile; for glutamine hydrolysis. L-glutamine-binding positions include 382–385 (LGMQ), E405, and R462. Catalysis depends on residues H507 and E509.

It belongs to the CTP synthase family. As to quaternary structure, homotetramer.

It carries out the reaction UTP + L-glutamine + ATP + H2O = CTP + L-glutamate + ADP + phosphate + 2 H(+). The enzyme catalyses L-glutamine + H2O = L-glutamate + NH4(+). The catalysed reaction is UTP + NH4(+) + ATP = CTP + ADP + phosphate + 2 H(+). The protein operates within pyrimidine metabolism; CTP biosynthesis via de novo pathway; CTP from UDP: step 2/2. Allosterically activated by GTP, when glutamine is the substrate; GTP has no effect on the reaction when ammonia is the substrate. The allosteric effector GTP functions by stabilizing the protein conformation that binds the tetrahedral intermediate(s) formed during glutamine hydrolysis. Inhibited by the product CTP, via allosteric rather than competitive inhibition. Its function is as follows. Catalyzes the ATP-dependent amination of UTP to CTP with either L-glutamine or ammonia as the source of nitrogen. Regulates intracellular CTP levels through interactions with the four ribonucleotide triphosphates. The protein is CTP synthase of Bacillus mycoides (strain KBAB4) (Bacillus weihenstephanensis).